An 850-amino-acid polypeptide reads, in one-letter code: Mitogen-activated protein kinase kinase kinase 11 (850 aa).

Ser-11 carries the phosphoserine modification. The span at 18 to 31 (GSGSGGGGGSGGVR) shows a compositional bias: gly residues. Residues 18–37 (GSGSGGGGGSGGVRPEGSPK) are disordered. At Ser-35 the chain carries Phosphoserine. An SH3 domain is found at 42-106 (YANPVWTALF…PSNYVSRGGG (65 aa)). In terms of domain architecture, Protein kinase spans 118–380 (LRLEEVIGIG…ASILQQLEAL (263 aa)). ATP is bound by residues 124–132 (IGIGGFGKV) and Lys-145. Asp-242 acts as the Proton acceptor in catalysis. Phosphothreonine; by autocatalysis is present on Thr-278. The residue at position 282 (Ser-282) is a Phosphoserine; by autocatalysis and MAP4K1. Position 395 is a phosphoserine (Ser-395). Leucine-zipper stretches follow at residues 404 to 425 (IQGL…EEEL) and 439 to 460 (LRRR…ELTL). Phosphoserine occurs at positions 508, 525, 549, 556, and 557. A disordered region spans residues 536–850 (LEPAESGQTW…QAPWAPEAGP (315 aa)). Over residues 551 to 563 (RRLDDSSNGERRA) the composition is skewed to basic and acidic residues. Low complexity predominate over residues 598-610 (SSPLGSPSTPPAL). Residue Ser-655 is modified to Phosphoserine. Residues 677-693 (TAPPPAQMASPCPPDLP) show a composition bias toward pro residues. Phosphothreonine is present on Thr-712. Phosphoserine is present on residues Ser-728, Ser-731, Ser-743, Ser-751, Ser-761, Ser-773, Ser-792, Ser-796, and Ser-818. A compositionally biased stretch (pro residues) spans 790–802 (RPSPLPSPQPAPR). Positions 803–819 (RAPWTLFPDSDPFWDSP) are enriched in low complexity.

This sequence belongs to the protein kinase superfamily. STE Ser/Thr protein kinase family. MAP kinase kinase kinase subfamily. In terms of assembly, homodimer; undergoes dimerization during activation. Interacts with MAP2K4/MKK4. Interacts with MAP2K7/MKK7. Found in a complex with SH3RF1, RAC1, MAP2K7/MKK7, MAPK8IP1/JIP1 and MAPK8/JNK1. Mg(2+) serves as cofactor. Autophosphorylation on serine and threonine residues within the activation loop plays a role in enzyme activation. Thr-278 is likely to be the main autophosphorylation site. Phosphorylation of Ser-556 and Ser-557 is induced by CDC42.

The protein resides in the cytoplasm. It is found in the cytoskeleton. The protein localises to the microtubule organizing center. It localises to the centrosome. It carries out the reaction L-seryl-[protein] + ATP = O-phospho-L-seryl-[protein] + ADP + H(+). The enzyme catalyses L-threonyl-[protein] + ATP = O-phospho-L-threonyl-[protein] + ADP + H(+). Its activity is regulated as follows. Homodimerization via the leucine zipper domains is required for autophosphorylation and subsequent activation. Activates the JUN N-terminal pathway. Required for serum-stimulated cell proliferation and for mitogen and cytokine activation of MAPK14 (p38), MAPK3 (ERK) and MAPK8 (JNK1) through phosphorylation and activation of MAP2K4/MKK4 and MAP2K7/MKK7. Plays a role in mitogen-stimulated phosphorylation and activation of BRAF, but does not phosphorylate BRAF directly. Influences microtubule organization during the cell cycle. The polypeptide is Mitogen-activated protein kinase kinase kinase 11 (Map3k11) (Rattus norvegicus (Rat)).